The primary structure comprises 361 residues: Peptide chain release factor 1 (361 aa).

At Gln236 the chain carries N5-methylglutamine.

This sequence belongs to the prokaryotic/mitochondrial release factor family. Methylated by PrmC. Methylation increases the termination efficiency of RF1.

It localises to the cytoplasm. Peptide chain release factor 1 directs the termination of translation in response to the peptide chain termination codons UAG and UAA. The chain is Peptide chain release factor 1 from Lactobacillus delbrueckii subsp. bulgaricus (strain ATCC 11842 / DSM 20081 / BCRC 10696 / JCM 1002 / NBRC 13953 / NCIMB 11778 / NCTC 12712 / WDCM 00102 / Lb 14).